The sequence spans 618 residues: UvrABC system protein C (618 aa).

Residues 13-92 (DKPGVYLMKN…IKKYRPKYNI (80 aa)) enclose the GIY-YIG domain. The UVR domain occupies 204 to 239 (LDIVENFKLNMEKAAENLEFEKAAMLRDKINIIEKI).

Belongs to the UvrC family. In terms of assembly, interacts with UvrB in an incision complex.

The protein resides in the cytoplasm. The UvrABC repair system catalyzes the recognition and processing of DNA lesions. UvrC both incises the 5' and 3' sides of the lesion. The N-terminal half is responsible for the 3' incision and the C-terminal half is responsible for the 5' incision. The protein is UvrABC system protein C of Clostridium botulinum (strain Okra / Type B1).